The chain runs to 345 residues: L-threonine 3-dehydrogenase (345 aa).

Position 38 (cysteine 38) interacts with Zn(2+). Active-site charge relay system residues include threonine 40 and histidine 43. Zn(2+) is bound by residues histidine 63, glutamate 64, cysteine 93, cysteine 96, cysteine 99, and cysteine 107. NAD(+) is bound by residues isoleucine 176, aspartate 196, arginine 201, 263–265, and 287–288; these read LGT and VT.

It belongs to the zinc-containing alcohol dehydrogenase family. Homotetramer. The cofactor is Zn(2+).

The protein localises to the cytoplasm. The enzyme catalyses L-threonine + NAD(+) = (2S)-2-amino-3-oxobutanoate + NADH + H(+). It functions in the pathway amino-acid degradation; L-threonine degradation via oxydo-reductase pathway; glycine from L-threonine: step 1/2. Its function is as follows. Catalyzes the NAD(+)-dependent oxidation of L-threonine to 2-amino-3-ketobutyrate. This Cutibacterium acnes (strain DSM 16379 / KPA171202) (Propionibacterium acnes) protein is L-threonine 3-dehydrogenase.